The following is a 279-amino-acid chain: Ribosomal RNA small subunit methyltransferase A (279 aa).

S-adenosyl-L-methionine is bound by residues histidine 15, leucine 17, glycine 42, glutamate 64, aspartate 89, and asparagine 109.

Belongs to the class I-like SAM-binding methyltransferase superfamily. rRNA adenine N(6)-methyltransferase family. RsmA subfamily.

Its subcellular location is the cytoplasm. The enzyme catalyses adenosine(1518)/adenosine(1519) in 16S rRNA + 4 S-adenosyl-L-methionine = N(6)-dimethyladenosine(1518)/N(6)-dimethyladenosine(1519) in 16S rRNA + 4 S-adenosyl-L-homocysteine + 4 H(+). In terms of biological role, specifically dimethylates two adjacent adenosines (A1518 and A1519) in the loop of a conserved hairpin near the 3'-end of 16S rRNA in the 30S particle. May play a critical role in biogenesis of 30S subunits. The sequence is that of Ribosomal RNA small subunit methyltransferase A from Prochlorococcus marinus (strain SARG / CCMP1375 / SS120).